The chain runs to 166 residues: Xanthine-guanine phosphoribosyltransferase (166 aa).

5-phospho-alpha-D-ribose 1-diphosphate-binding positions include Arg42 to Gly43 and Asp99 to Thr107. Asp100 is a Mg(2+) binding site. The guanine site is built by Asp103 and Ile146. Residues Asp103 and Ile146 each contribute to the xanthine site. Residues Asp103–Thr107 and Trp145–Ile146 each bind GMP.

The protein belongs to the purine/pyrimidine phosphoribosyltransferase family. XGPT subfamily. In terms of assembly, homotetramer. Mg(2+) is required as a cofactor.

It localises to the cell inner membrane. It catalyses the reaction GMP + diphosphate = guanine + 5-phospho-alpha-D-ribose 1-diphosphate. It carries out the reaction XMP + diphosphate = xanthine + 5-phospho-alpha-D-ribose 1-diphosphate. The enzyme catalyses IMP + diphosphate = hypoxanthine + 5-phospho-alpha-D-ribose 1-diphosphate. It functions in the pathway purine metabolism; GMP biosynthesis via salvage pathway; GMP from guanine: step 1/1. It participates in purine metabolism; XMP biosynthesis via salvage pathway; XMP from xanthine: step 1/1. In terms of biological role, purine salvage pathway enzyme that catalyzes the transfer of the ribosyl-5-phosphate group from 5-phospho-alpha-D-ribose 1-diphosphate (PRPP) to the N9 position of the 6-oxopurines guanine and xanthine to form the corresponding ribonucleotides GMP (guanosine 5'-monophosphate) and XMP (xanthosine 5'-monophosphate), with the release of PPi. To a lesser extent, also acts on hypoxanthine. The protein is Xanthine-guanine phosphoribosyltransferase of Mesorhizobium japonicum (strain LMG 29417 / CECT 9101 / MAFF 303099) (Mesorhizobium loti (strain MAFF 303099)).